A 145-amino-acid chain; its full sequence is Putative pre-16S rRNA nuclease (145 aa).

It belongs to the YqgF nuclease family.

Its subcellular location is the cytoplasm. Its function is as follows. Could be a nuclease involved in processing of the 5'-end of pre-16S rRNA. This chain is Putative pre-16S rRNA nuclease, found in Pseudomonas fluorescens.